The chain runs to 105 residues: Large ribosomal subunit protein bL21 (105 aa).

This sequence belongs to the bacterial ribosomal protein bL21 family. Part of the 50S ribosomal subunit. Contacts protein L20.

This protein binds to 23S rRNA in the presence of protein L20. The polypeptide is Large ribosomal subunit protein bL21 (Natranaerobius thermophilus (strain ATCC BAA-1301 / DSM 18059 / JW/NM-WN-LF)).